Reading from the N-terminus, the 300-residue chain is MAEVVTGRFAPSPTGALHAGSMVAALASWLDVRAQGGVWLVRMEDVDTPRCVPGAAEQILSQLAACGLNSDRPPMWQSSRGAAYGAALAQLVEAGLAYPCACTRKQIEQDALAAGHLHLRQAERVYPGTCRPERGGLAGRAARAWRLHTARAGGSAAVSWSDRRLGRRSQGVEAAVGDFVLRRADGLWAYQLAVVVDDAAQGITDVVRGEDLADNTARQILLQRALGLPMPRYLHTPLVLAADGQKLSKQNGAVPVAMDDPAGVLRAAAAVLGLTLDAGRPVGETLAQAVALWRAGWLAR.

Residues 8–12 and E44 each bind L-glutamate; that span reads RFAPS. The 'HIGH' region motif lies at 11–21; that stretch reads PSPTGALHAGS. Zn(2+) contacts are provided by C100, C102, Y126, and C130. Residues Y190 and R208 each coordinate L-glutamate. The short motif at 246–250 is the 'KMSKS' region element; it reads KLSKQ. Residue K249 coordinates ATP.

It belongs to the class-I aminoacyl-tRNA synthetase family. GluQ subfamily. Zn(2+) serves as cofactor.

Its function is as follows. Catalyzes the tRNA-independent activation of glutamate in presence of ATP and the subsequent transfer of glutamate onto a tRNA(Asp). Glutamate is transferred on the 2-amino-5-(4,5-dihydroxy-2-cyclopenten-1-yl) moiety of the queuosine in the wobble position of the QUC anticodon. In Leptothrix cholodnii (strain ATCC 51168 / LMG 8142 / SP-6) (Leptothrix discophora (strain SP-6)), this protein is Glutamyl-Q tRNA(Asp) synthetase.